Reading from the N-terminus, the 228-residue chain is Cytidylate kinase (228 aa).

17-25 is an ATP binding site; it reads GPTASGKGT.

Belongs to the cytidylate kinase family. Type 1 subfamily.

It localises to the cytoplasm. It catalyses the reaction CMP + ATP = CDP + ADP. It carries out the reaction dCMP + ATP = dCDP + ADP. This chain is Cytidylate kinase, found in Burkholderia multivorans (strain ATCC 17616 / 249).